Consider the following 324-residue polypeptide: D-alanine--D-alanine ligase (324 aa).

The ATP-grasp domain occupies 116–311 (KQVWHTLGIP…FQQLVLAILA (196 aa)). An ATP-binding site is contributed by 142–197 (ATELGFPLIVKPAHEGSSIGMAKVSSASELIDAWKAASTYDSQVLVEQWIHGPEFT). Residues D265, E278, and N280 each contribute to the Mg(2+) site.

This sequence belongs to the D-alanine--D-alanine ligase family. Requires Mg(2+) as cofactor. Mn(2+) is required as a cofactor.

It localises to the cytoplasm. The enzyme catalyses 2 D-alanine + ATP = D-alanyl-D-alanine + ADP + phosphate + H(+). It participates in cell wall biogenesis; peptidoglycan biosynthesis. Functionally, cell wall formation. This chain is D-alanine--D-alanine ligase, found in Pseudomonas fluorescens (strain Pf0-1).